The chain runs to 527 residues: Eukaryotic translation initiation factor 2 subunit gamma (527 aa).

The tract at residues 1 to 83 is disordered; it reads MSDLQDQEPS…GLPEQPLNPD (83 aa). Thr-60 is subject to Phosphothreonine. A tr-type G domain is found at 98-307; that stretch reads QATINIGTIG…IVKTIPVPPR (210 aa). Positions 107-114 are G1; the sequence is GHVAHGKS. 110–115 serves as a coordination point for GTP; that stretch reads AHGKST. The interval 135–139 is G2; that stretch reads NITIK. The segment at 193–196 is G3; sequence DCPG. Position 249 to 252 (249 to 252) interacts with GTP; sequence NKVD. Positions 249-252 are G4; sequence NKVD. The residue at position 258 (Ser-258) is a Phosphoserine. Residue 284-286 participates in GTP binding; sequence SAQ. Residues 284–286 form a G5 region; the sequence is SAQ. Positions 515–527 are interacts with CDC123; that stretch reads ATIKKGTTLEPIA.

This sequence belongs to the TRAFAC class translation factor GTPase superfamily. Classic translation factor GTPase family. EIF2G subfamily. In terms of assembly, eukaryotic translation initiation factor 2 eIF2 is a heterotrimeric complex composed of an alpha, a beta and a gamma subunit. The factors eIF-1, eIF-1A, eIF-2, eIF-3, TIF5/eIF-5 and methionyl-tRNAi form a multifactor complex (MFC) that may bind to the 40S ribosome. Interacts (via C-terminus) with CDC123; the interaction is direct. Interacts with GCD1. Interacts with the eIF2B complex subunits GCD6 and GCD7. Interacts with methionyl-initiator methionine tRNA.

The protein resides in the cytoplasm. It localises to the cytosol. The enzyme catalyses GTP + H2O = GDP + phosphate + H(+). Its function is as follows. As a subunit of eukaryotic initiation factor 2 eIF2, involved in the early steps of protein synthesis. In the presence of GTP, eIF-2 forms a ternary complex with initiator tRNA Met-tRNAi and then recruits the 40S ribosomal complex and initiation factors eIF-1, eIF-1A and eIF-3 to form the 43S pre-initiation complex (43S PIC), a step that determines the rate of protein translation. The 43S PIC binds to mRNA and scans downstream to the initiation codon, where it forms a 48S initiation complex by codon-anticodon base pairing. This leads to the displacement of eIF-1 to allow GTPase-activating protein (GAP) eIF-5-mediated hydrolysis of eIF2-bound GTP. Hydrolysis of GTP and release of Pi, which makes GTP hydrolysis irreversible, causes the release of the eIF-2-GDP binary complex from the 40S subunit, an event that is essential for the subsequent joining of the 60S ribosomal subunit to form an elongation-competent 80S ribosome. In order for eIF-2 to recycle and catalyze another round of initiation, the GDP bound to eIF-2 must be exchanged with GTP by way of a reaction catalyzed by GDP-GTP exchange factor (GEF) eIF-2B. This Saccharomyces cerevisiae (strain ATCC 204508 / S288c) (Baker's yeast) protein is Eukaryotic translation initiation factor 2 subunit gamma (GCD11).